The sequence spans 181 residues: Phospholipase A2 inhibitor gamma subunit B (181 aa).

Cystine bridges form between Cys-3/Cys-27, Cys-6/Cys-13, Cys-20/Cys-48, Cys-54/Cys-75, Cys-76/Cys-81, Cys-101/Cys-126, Cys-119/Cys-146, and Cys-152/Cys-172.

It belongs to the CNF-like-inhibitor family. In terms of assembly, heterotrimer of 2 subunits A and 1 subunit B. In terms of tissue distribution, expressed by the liver.

The protein resides in the secreted. Its function is as follows. Strongly inhibits its own venom PLA2 and all other PLA2s tested including Elapid, Crotalid and Viperid venom PLA2s, as well as honeybee PLA2s. The sequence is that of Phospholipase A2 inhibitor gamma subunit B from Laticauda semifasciata (Black-banded sea krait).